The sequence spans 537 residues: Intercellular adhesion molecule 1 (537 aa).

Residues 1–27 (MASTRAKPTLPLLLALVTVVIPGPGDA) form the signal peptide. The Extracellular portion of the chain corresponds to 28–485 (QVSIHPREAF…LTVLYHSQNN (458 aa)). 2 consecutive Ig-like C2-type domains span residues 41–102 (GGSV…QSSA) and 127–195 (GKDL…LDLR). N-linked (GlcNAc...) asparagine glycosylation occurs at N47. 3 disulfides stabilise this stretch: C48–C91, C52–C95, and C134–C188. A Cell attachment site; atypical motif is present at residues 151–153 (RGE). The Cell attachment site signature appears at 179–181 (RGD). N-linked (GlcNAc...) asparagine glycosylation is found at N185, N204, N267, N311, N362, N388, N409, N456, and N469. Residues 232–299 (GTQQKLFCSL…LRCVLELADQ (68 aa)) form the Ig-like C2-type 3 domain. The cysteines at positions 239 and 292 are disulfide-linked. An Ig-like C2-type 4 domain is found at 327–381 (GSQVTVKCEAHSGSKVVLLSGVEPRPPTPQVQFTLNASSEDHKRSFFCSAALEVA). C334 and C374 are joined by a disulfide. Cystine bridges form between C406-C422, C422-C461, and C434-C461. An Ig-like C2-type 5 domain is found at 415–468 (GSQQTLKCQAWGNPSPKMTCRRKADGALLPIGVVKSVKQEMNGTYVCHAFSSHG). Residues 486–509 (WTIIILVPVLLVIVGLVMAASYVY) form a helical membrane-spanning segment. Residues 510–537 (NRQRKIRIYKLQKAQEEAIKLKGQAPPP) lie on the Cytoplasmic side of the membrane.

The protein belongs to the immunoglobulin superfamily. ICAM family. In terms of assembly, homodimer. Interacts with MUC1 and promotes cell aggregation in epithelial cells. Interacts with ARHGEF26/SGEF. Interacts (on T cell side) with CD81, CD247 and CD9 at immunological synapses between antigen-presenting cells and T cells. Monoubiquitinated, which is promoted by MARCH9 and leads to endocytosis. Expressed at low level on a subpopulation of lymphocytes, macrophages, and endothelial cells, but is strongly induced on these cells, and on fibroblasts and epithelial cells.

It is found in the membrane. Its function is as follows. ICAM proteins are ligands for the leukocyte adhesion protein LFA-1 (integrin alpha-L/beta-2). During leukocyte trans-endothelial migration, ICAM1 engagement promotes the assembly of endothelial apical cups through ARHGEF26/SGEF and RHOG activation. The protein is Intercellular adhesion molecule 1 (Icam1) of Mus musculus (Mouse).